The following is a 1020-amino-acid chain: Protein CLASP-2 (1020 aa).

Over residues 259 to 271 the composition is skewed to low complexity; it reads ASDAASSSTSINS. Disordered stretches follow at residues 259–280, 329–387, and 419–461; these read ASDA…PFRS, PMTT…RPSA, and LQKA…ALDT. Polar residues predominate over residues 329-343; sequence PMTTRTLSKIDTSPG. Over residues 372-381 the composition is skewed to low complexity; it reads SQPGSRNGSP. Residues 450-460 are compositionally biased toward polar residues; that stretch reads QKATPQKSALD. One copy of the HEAT repeat lies at 954–992; sequence LAPCVIKSYDSPSSAVRKTAVYCLVAMVNKLGMKTMEPH.

This sequence belongs to the CLASP family. As to quaternary structure, interacts with hcp-1 and hcp-2.

It localises to the cytoplasm. Its subcellular location is the cytoskeleton. The protein localises to the microtubule organizing center. It is found in the centrosome. The protein resides in the chromosome. It localises to the centromere. Its subcellular location is the kinetochore. The protein localises to the spindle. In terms of biological role, probable microtubule plus-end tracking protein that promotes the stabilization of dynamic microtubules. Required for the formation of mitotic and meiotic spindles. Specifically promotes the polymerization of kinetochore-bound microtubules. Also required for cytoplasmic streaming. Essential for embryonic development. This Caenorhabditis elegans protein is Protein CLASP-2 (cls-2).